Consider the following 361-residue polypeptide: Chorismate synthase (361 aa).

Residues R48 and R54 each contribute to the NADP(+) site. FMN-binding positions include 125-127, 238-239, G278, 293-297, and R319; these read RSS, NA, and KPTSS.

It belongs to the chorismate synthase family. Homotetramer. The cofactor is FMNH2.

The enzyme catalyses 5-O-(1-carboxyvinyl)-3-phosphoshikimate = chorismate + phosphate. Its pathway is metabolic intermediate biosynthesis; chorismate biosynthesis; chorismate from D-erythrose 4-phosphate and phosphoenolpyruvate: step 7/7. In terms of biological role, catalyzes the anti-1,4-elimination of the C-3 phosphate and the C-6 proR hydrogen from 5-enolpyruvylshikimate-3-phosphate (EPSP) to yield chorismate, which is the branch point compound that serves as the starting substrate for the three terminal pathways of aromatic amino acid biosynthesis. This reaction introduces a second double bond into the aromatic ring system. The polypeptide is Chorismate synthase (Klebsiella pneumoniae (strain 342)).